The sequence spans 139 residues: MNIFYVIVLLSFFLSKSSGFFPVIEVRIMNRRGNGRSIGIHCRSKDNDLQNQTVTSGHDMSFSFREDFFHTTHFYCDLQWDKETKFGFYSYQAKRDDDGRCSSQCLWKIMDDGLYGFDQEHQIWQIYHLIKKERKEGRT.

The first 19 residues, 1 to 19 (MNIFYVIVLLSFFLSKSSG), serve as a signal peptide directing secretion. A glycan (N-linked (GlcNAc...) asparagine) is linked at asparagine 51.

It belongs to the plant self-incompatibility (S1) protein family. In terms of processing, glycosylated (S1b) and unglocosylated (S1a) forms coexist. Accumulates in the stigma (at protein level).

It is found in the secreted. In terms of biological role, exhibits specific pollen self-inhibitory activity thus preventing self-fertilization. The polypeptide is Self-incompatibility protein S1 (Papaver rhoeas (Common poppy)).